Reading from the N-terminus, the 468-residue chain is Protein translocase subunit SecY (468 aa).

Topologically, residues 1 to 20 (MGARDVIYAMEKWFPEVERP) are cytoplasmic. A helical membrane pass occupies residues 21 to 47 (KKHVPLKEKFVWTGLALVLYYVLAEIP). Residues 48–58 (VYGIPKKIQDY) lie on the Extracellular side of the membrane. Positions 59–66 (FQFLRVVL) form an intramembrane region, helical. The discontinuously helical transmembrane segment at 59 to 87 (FQFLRVVLAGRNGSILTLGIGPIVTAGII) threads the bilayer. An intramembrane segment occupies 67–78 (AGRNGSILTLGI). Residues 79-87 (GPIVTAGII) constitute an intramembrane region (helical). Residues 88–108 (LQLLVGSELIRLDLANPEDRR) are Cytoplasmic-facing. The chain crosses the membrane as a helical span at residues 109–133 (FYQALQRVFSVFMCFFEAAIWVLGG). Topologically, residues 134 to 144 (AFGRVGVDVTY) are extracellular. The helical transmembrane segment at 145–169 (TIATLMIIQLALGGIILIVLDELVS) threads the bilayer. The Cytoplasmic portion of the chain corresponds to 170–175 (KWGIGS). The chain crosses the membrane as a helical span at residues 176–194 (GISLFIAAGVSQRILTRSL). Residues 195–239 (NPLTDPNIIDPLTGKPAIVGAIPYFIQHILDGDLKGALYRGGSAP) lie on the Extracellular side of the membrane. A helical membrane pass occupies residues 240–261 (DMIAVTATIIVFLVVVYFESMR). At 262–285 (VEIPLGYRGVTIRGRYPIKFLYVS) the chain is on the cytoplasmic side. A helical transmembrane segment spans residues 286 to 307 (NIPIILTFALYANIQLWARVLD). Over 308–346 (RFGHPWLGRFDPVTGNPIGGFVLYVIPPRNIFTVIDNPV) the chain is Extracellular. Residues 347–366 (RAIIYLILTIIFSLLFGFLW) form a helical membrane-spanning segment. Residues 367-409 (VELTGLDARTIARQLQRAGLQIPGFRRDPRTLERVLQKYIPYV) are Cytoplasmic-facing. Residues 410–428 (TFWGSLTVALISVLADFLG) form a helical membrane-spanning segment. Topologically, residues 429–431 (ALG) are extracellular. Residues 432–446 (TGTGILLTVGILYRF) traverse the membrane as a helical segment. Residues 447-468 (YEEIAREQITEMFPALRRLFKG) lie on the Cytoplasmic side of the membrane.

The protein belongs to the SecY/SEC61-alpha family. In terms of assembly, component of the Sec protein translocase complex. Heterotrimer consisting of alpha (SecY), beta (SecG) and gamma (SecE) subunits. The heterotrimers can form oligomers, although 1 heterotrimer is thought to be able to translocate proteins. Interacts with the ribosome. May interact with SecDF, and other proteins may be involved.

Its subcellular location is the cell membrane. Functionally, the central subunit of the protein translocation channel SecYEG. Consists of two halves formed by TMs 1-5 and 6-10. These two domains form a lateral gate at the front which open onto the bilayer between TMs 2 and 7, and are clamped together by SecE at the back. The channel is closed by both a pore ring composed of hydrophobic SecY resides and a short helix (helix 2A) on the extracellular side of the membrane which forms a plug. The plug probably moves laterally to allow the channel to open. The ring and the pore may move independently. The chain is Protein translocase subunit SecY from Pyrococcus horikoshii (strain ATCC 700860 / DSM 12428 / JCM 9974 / NBRC 100139 / OT-3).